A 736-amino-acid polypeptide reads, in one-letter code: Catalase-peroxidase (736 aa).

Positions 1–21 are disordered; the sequence is MSNEQKCPFSGTHGARTTVGT. The tryptophyl-tyrosyl-methioninium (Trp-Tyr) (with M-250) cross-link spans 96–224; the sequence is WHSAGTYRTG…LAAVQMGLIY (129 aa). The Proton acceptor role is filled by His-97. Residues 224–250 constitute a cross-link (tryptophyl-tyrosyl-methioninium (Tyr-Met) (with W-96)); it reads YVNPEGPDGNPDPVASGRDIRETFARM. His-265 contacts heme b.

Belongs to the peroxidase family. Peroxidase/catalase subfamily. In terms of assembly, homodimer or homotetramer. Requires heme b as cofactor. In terms of processing, formation of the three residue Trp-Tyr-Met cross-link is important for the catalase, but not the peroxidase activity of the enzyme.

The catalysed reaction is H2O2 + AH2 = A + 2 H2O. It carries out the reaction 2 H2O2 = O2 + 2 H2O. Its function is as follows. Bifunctional enzyme with both catalase and broad-spectrum peroxidase activity. The protein is Catalase-peroxidase of Dechloromonas aromatica (strain RCB).